The chain runs to 358 residues: MKMKTVLVIINCIFLAIGNCGGPLMMRLYFQNGGERIWFPSFLQTVGCPLIFFPLLLSFLRRRRCLEEQETTPFFLMKPPLFIAAIVVGLLVGFDNYLYSYGLAYIPVSTASLIISAQLGFTALFAFFMVKQKFTPFTINAIVLLTGGAVVLALNSDSDKLANETHKEYVVGFIMTLGAALLYGFILPLVELSYKKSGQRITYTLALEFQMVLCFAATCVCLVGMLAAGDFKVKHALFIFKNRVIAGEARDFKLGESLYYVVIVFTAIIWQAFFVGAIGLIFCASSLVSGIMVSALLPVTVILAVICFQEKFQAGKGVALALSLWGSVSYFYGQVKSEEKTKAQDTQLSQLPVTDYVA.

The next 10 helical transmembrane spans lie at 6-26 (VLVIINCIFLAIGNCGGPLMM), 37-57 (IWFPSFLQTVGCPLIFFPLLL), 74-94 (FFLMKPPLFIAAIVVGLLVGF), 110-130 (TASLIISAQLGFTALFAFFMV), 134-154 (FTPFTINAIVLLTGGAVVLAL), 170-190 (VVGFIMTLGAALLYGFILPLV), 209-229 (FQMVLCFAATCVCLVGMLAAG), 262-282 (VIVFTAIIWQAFFVGAIGLIF), 288-308 (VSGIMVSALLPVTVILAVICF), and 312-332 (FQAGKGVALALSLWGSVSYFY). Residues 46-154 (VGCPLIFFPL…LTGGAVVLAL (109 aa)) form the EamA domain.

Belongs to the purine permeases (TC 2.A.7.14) family. Expressed in the vascular system of leaves. Restricted to the phloem. Expressed in flowers and roots and not detected in stems.

The protein localises to the membrane. Its activity is regulated as follows. Competitive inhibition of adenine transport by isopentenyladenine, kinetin, benzylaminopurine, trans- and cis-zeatin and trans-zeatin riboside. In terms of biological role, mediates adenine transport. May be involved in the uptake of cytokinin analogs. The sequence is that of Purine permease 2 (PUP2) from Arabidopsis thaliana (Mouse-ear cress).